Consider the following 801-residue polypeptide: U-box domain-containing protein 44 (801 aa).

The U-box domain occupies 22–101; that stretch reads HIYEAFICPL…EEWRSRNDAA (80 aa). 9 ARM repeats span residues 134–173, 176–215, 218–259, 261–300, 301–340, 342–386, 390–429, 435–475, and 480–521; these read RSNR…VVVE, DESK…ELSK, ALCE…NMER, EEIV…ELPL, NNDV…KISS, EGSA…NIVN, DFDK…GLTS, PKVV…NLSP, and ELAK…ELPD.

Interacts with AAO3. Binds to SD129. Expressed in leaves, root vasculature and guard cells.

It catalyses the reaction S-ubiquitinyl-[E2 ubiquitin-conjugating enzyme]-L-cysteine + [acceptor protein]-L-lysine = [E2 ubiquitin-conjugating enzyme]-L-cysteine + N(6)-ubiquitinyl-[acceptor protein]-L-lysine.. It participates in protein modification; protein ubiquitination. Functionally, functions as an E3 ubiquitin-protein ligase. Prevents premature senescence probably by targeting proteins involved in this process for degradation. Promotes the degradation of AAO3 and thus represses abscisic acid (ABA) biosynthesis. This is U-box domain-containing protein 44 (PUB44) from Arabidopsis thaliana (Mouse-ear cress).